Reading from the N-terminus, the 206-residue chain is MFDIGWTELLVIAVVLIVVVGPKDLPPMLRAFGKMTQRARKVAGEFRAQFDEALREAELDDVRQTISDAQKLNPVSSLREAMNPLRQMGNEIKADLQKATAVTENKTEVPSAAMSAPTPSMSLPETPPVVPTPAPAPEPAAVAAETVAAKPKAPRKPRAKAADKAAFAIAAPVENPPAEKPKRTTAARKPAAPKTPVQTKKKKDEA.

Residues 1–21 (MFDIGWTELLVIAVVLIVVVG) traverse the membrane as a helical segment. The segment at 104-206 (ENKTEVPSAA…VQTKKKKDEA (103 aa)) is disordered. Over residues 110 to 124 (PSAAMSAPTPSMSLP) the composition is skewed to low complexity. Pro residues predominate over residues 125-138 (ETPPVVPTPAPAPE). 2 stretches are compositionally biased toward low complexity: residues 139-151 (PAAV…AAKP) and 187-196 (ARKPAAPKTP).

This sequence belongs to the TatB family. As to quaternary structure, the Tat system comprises two distinct complexes: a TatABC complex, containing multiple copies of TatA, TatB and TatC subunits, and a separate TatA complex, containing only TatA subunits. Substrates initially bind to the TatABC complex, which probably triggers association of the separate TatA complex to form the active translocon.

The protein localises to the cell inner membrane. In terms of biological role, part of the twin-arginine translocation (Tat) system that transports large folded proteins containing a characteristic twin-arginine motif in their signal peptide across membranes. Together with TatC, TatB is part of a receptor directly interacting with Tat signal peptides. TatB may form an oligomeric binding site that transiently accommodates folded Tat precursor proteins before their translocation. The protein is Sec-independent protein translocase protein TatB of Rhizobium etli (strain ATCC 51251 / DSM 11541 / JCM 21823 / NBRC 15573 / CFN 42).